A 613-amino-acid chain; its full sequence is Serine protease FAM111A (613 aa).

Residues Met1–Asn72 form a disordered region. Residue Lys19 forms a Glycyl lysine isopeptide (Lys-Gly) (interchain with G-Cter in SUMO2) linkage. Ser25 carries the post-translational modification Phosphoserine. A Glycyl lysine isopeptide (Lys-Gly) (interchain with G-Cter in SUMO2) cross-link involves residue Lys29. A compositionally biased stretch (basic and acidic residues) spans Val40–Arg56. Lys62 participates in a covalent cross-link: Glycyl lysine isopeptide (Lys-Gly) (interchain with G-Cter in SUMO2). Residues His383, Asp437, and Ser543 each act as charge relay system in the active site.

The protein belongs to the FAM111 family. As to quaternary structure, interacts (via PIP-box) with PCNA; this interaction is direct. Post-translationally, autocatalytically cleaved; autocatalytic cleavage takes place in trans.

It localises to the nucleus. The protein localises to the chromosome. The protein resides in the cytoplasm. Its function is as follows. Single-stranded DNA-binding serine protease that mediates the proteolytic cleavage of covalent DNA-protein cross-links (DPCs) during DNA synthesis, thereby playing a key role in maintaining genomic integrity. DPCs are highly toxic DNA lesions that interfere with essential chromatin transactions, such as replication and transcription, and which are induced by reactive agents, such as UV light or formaldehyde. Protects replication fork from stalling by removing DPCs, such as covalently trapped topoisomerase 1 (TOP1) adducts on DNA lesion, or poly(ADP-ribose) polymerase 1 (PARP1)-DNA complexes trapped by PARP inhibitors. Required for PCNA loading on replication sites. Promotes S-phase entry and DNA synthesis. This is Serine protease FAM111A from Mus musculus (Mouse).